Consider the following 595-residue polypeptide: Aspartate--tRNA ligase (595 aa).

Position 176 (glutamate 176) interacts with L-aspartate. Residues 200-203 (QIFK) form an aspartate region. Arginine 222 serves as a coordination point for L-aspartate. ATP is bound by residues 222 to 224 (RDE) and glutamine 231. Histidine 450 serves as a coordination point for L-aspartate. Residue glutamate 484 participates in ATP binding. An L-aspartate-binding site is contributed by arginine 491. 536-539 (GLDR) contributes to the ATP binding site.

It belongs to the class-II aminoacyl-tRNA synthetase family. Type 1 subfamily. As to quaternary structure, homodimer.

It localises to the cytoplasm. It catalyses the reaction tRNA(Asp) + L-aspartate + ATP = L-aspartyl-tRNA(Asp) + AMP + diphosphate. Catalyzes the attachment of L-aspartate to tRNA(Asp) in a two-step reaction: L-aspartate is first activated by ATP to form Asp-AMP and then transferred to the acceptor end of tRNA(Asp). The polypeptide is Aspartate--tRNA ligase (Halalkalibacterium halodurans (strain ATCC BAA-125 / DSM 18197 / FERM 7344 / JCM 9153 / C-125) (Bacillus halodurans)).